The primary structure comprises 250 residues: 5'-nucleotidase SurE (250 aa).

A divalent metal cation contacts are provided by Asp8, Asp9, Ser39, and Asn95.

The protein belongs to the SurE nucleotidase family. Requires a divalent metal cation as cofactor.

Its subcellular location is the cytoplasm. The catalysed reaction is a ribonucleoside 5'-phosphate + H2O = a ribonucleoside + phosphate. In terms of biological role, nucleotidase that shows phosphatase activity on nucleoside 5'-monophosphates. This chain is 5'-nucleotidase SurE, found in Cupriavidus pinatubonensis (strain JMP 134 / LMG 1197) (Cupriavidus necator (strain JMP 134)).